We begin with the raw amino-acid sequence, 271 residues long: Diaminopimelate epimerase (271 aa).

Substrate is bound by residues N13, Q46, and N66. The active-site Proton donor is C75. Residues 76 to 77 (GN), N155, N188, and 206 to 207 (ER) each bind substrate. C215 functions as the Proton acceptor in the catalytic mechanism. 216–217 (GS) contributes to the substrate binding site.

The protein belongs to the diaminopimelate epimerase family. As to quaternary structure, homodimer.

It is found in the cytoplasm. It carries out the reaction (2S,6S)-2,6-diaminopimelate = meso-2,6-diaminopimelate. It participates in amino-acid biosynthesis; L-lysine biosynthesis via DAP pathway; DL-2,6-diaminopimelate from LL-2,6-diaminopimelate: step 1/1. Its function is as follows. Catalyzes the stereoinversion of LL-2,6-diaminopimelate (L,L-DAP) to meso-diaminopimelate (meso-DAP), a precursor of L-lysine and an essential component of the bacterial peptidoglycan. This Vesicomyosocius okutanii subsp. Calyptogena okutanii (strain HA) protein is Diaminopimelate epimerase.